A 250-amino-acid polypeptide reads, in one-letter code: NADH-quinone oxidoreductase subunit C (250 aa).

Residues 193–250 (GMTPPLPGDEKADMPPIDDPMVTEGPEDTGAGARANAKAAEGTPADPPAMDDEEEDDA) are disordered. A compositionally biased stretch (low complexity) spans 222-236 (GAGARANAKAAEGTP). The span at 241–250 (AMDDEEEDDA) shows a compositional bias: acidic residues.

The protein belongs to the complex I 30 kDa subunit family. As to quaternary structure, NDH-1 is composed of 14 different subunits. Subunits NuoB, C, D, E, F, and G constitute the peripheral sector of the complex.

Its subcellular location is the cell inner membrane. The enzyme catalyses a quinone + NADH + 5 H(+)(in) = a quinol + NAD(+) + 4 H(+)(out). Functionally, NDH-1 shuttles electrons from NADH, via FMN and iron-sulfur (Fe-S) centers, to quinones in the respiratory chain. The immediate electron acceptor for the enzyme in this species is believed to be ubiquinone. Couples the redox reaction to proton translocation (for every two electrons transferred, four hydrogen ions are translocated across the cytoplasmic membrane), and thus conserves the redox energy in a proton gradient. In Erythrobacter litoralis (strain HTCC2594), this protein is NADH-quinone oxidoreductase subunit C.